The sequence spans 381 residues: Protein TRIGALACTOSYLDIACYLGLYCEROL 2, chloroplastic (381 aa).

The transit peptide at 1–45 (MIGNPVIQVPSSLMPSSSMIACPRVSPNGVPYLPPKPRTRHLVVR) directs the protein to the chloroplast. The Stromal portion of the chain corresponds to 46–96 (AASNSDAAHGQPSSDGGKNPLTVVLDVPRNIWRQTLKPLSDFGFGKRSIWE). Residues 97–117 (GGVGLFIVSGATLLALSWAWL) form a helical membrane-spanning segment. At 118–381 (RGFQMRSKFR…LLIKSLSRLL (264 aa)) the chain is on the chloroplast intermembrane side.

Homomultimer. Substrate-binding subunit of the TGD complex, a lipid translocator at the inner chloroplast envelope membrane made of TGD1, TGD2 and TGD3. Interacts with TGD1 and TGD3 with an overall subunit stoichiometry of 2 TGD1, 2 TGD3 and 8 to 12 TGD2. Interacts with TGD5.

It localises to the plastid. It is found in the chloroplast inner membrane. Functionally, component of a phosphatidic acid/lipid transport complex in the chloroplast envelope. Specifically binds phosphatidic acid (PA). Involved in lipid transfer from the endoplasmic reticulum (ER) to plastids, and necessary for thylakoids formation. The protein is Protein TRIGALACTOSYLDIACYLGLYCEROL 2, chloroplastic of Arabidopsis thaliana (Mouse-ear cress).